The primary structure comprises 697 residues: Methionine--tRNA ligase (697 aa).

A 'HIGH' region motif is present at residues 12-22 (PYANGHFHIGH). Residues Cys143, Cys146, Cys156, and Cys159 each contribute to the Zn(2+) site. The 'KMSKS' region signature appears at 342–346 (KMSKS). Residue Lys345 coordinates ATP. Residues 557-577 (FEPPAEPSPQTSPAAAGAGAV) form a disordered region. Residues 591-697 (DFTKIDLRLA…PGAVPGLRVR (107 aa)) form the tRNA-binding domain.

It belongs to the class-I aminoacyl-tRNA synthetase family. MetG type 1 subfamily. In terms of assembly, homodimer. It depends on Zn(2+) as a cofactor.

The protein resides in the cytoplasm. It catalyses the reaction tRNA(Met) + L-methionine + ATP = L-methionyl-tRNA(Met) + AMP + diphosphate. Its function is as follows. Is required not only for elongation of protein synthesis but also for the initiation of all mRNA translation through initiator tRNA(fMet) aminoacylation. The polypeptide is Methionine--tRNA ligase (Methylibium petroleiphilum (strain ATCC BAA-1232 / LMG 22953 / PM1)).